A 364-amino-acid polypeptide reads, in one-letter code: Cell cycle control protein 50A (364 aa).

The interval 1-28 (MAMNYSAKDEVDGGPAGPPGGAAKTRRP) is disordered. N-acetylalanine is present on A2. Topologically, residues 2 to 49 (AMNYSAKDEVDGGPAGPPGGAAKTRRPDNTAFKQQRLPAWQPILTAGT) are cytoplasmic. The helical transmembrane segment at 50–70 (VLPTFFIIGLIFIPIGIGIFV) threads the bilayer. Residues 71–328 (TSNNIREIEI…SWMGGKNPFL (258 aa)) lie on the Exoplasmic loop side of the membrane. Cystine bridges form between C91/C104, C94/C102, and C157/C171. N98 is a glycosylation site (N-linked (GlcNAc...) asparagine). N297 carries an N-linked (GlcNAc...) asparagine glycan. A helical transmembrane segment spans residues 329 to 349 (GIAYITIGSISFLLGVVLLVI). The Cytoplasmic segment spans residues 350 to 364 (NHKYRNSSNTADITI).

Belongs to the CDC50/LEM3 family. In terms of assembly, component of various P4-ATPase flippase complexes which consists of a catalytic alpha subunit and an accessory beta subunit. Interacts with ATP8A1 to form a flippase complex; this complex forms an intermediate phosphoenzyme. The ATP8A2:TMEM30A flippase complex has been purified, and ATP8B1:TMEM30A and ATP8B2:TMEM30A flippase complexes have been shown to form intermediate phosphoenzymes in vitro. Interacts with alpha subunits ATP8A1, ATP8B1, ATP8B2, ATP8B4, ATP10A, ATP10B, ATP10D, ATP11A, ATP11B and ATP11C. N-glycosylated. Contains high mannose-type oligosaccharides. In terms of tissue distribution, expressed in photoreceptor cells; detected in retina outer segment (at protein level). Detected in hepatocytes liver sinusoidal endothelial cells and kidney brush border of the proximal tubules (at protein level). Expressed in brain (at protein level).

The protein localises to the membrane. Its subcellular location is the cell membrane. It localises to the golgi apparatus. It is found in the cytoplasmic vesicle. The protein resides in the secretory vesicle membrane. The protein localises to the apical cell membrane. Its function is as follows. Accessory component of a P4-ATPase flippase complex which catalyzes the hydrolysis of ATP coupled to the transport of aminophospholipids from the outer to the inner leaflet of various membranes and ensures the maintenance of asymmetric distribution of phospholipids. Phospholipid translocation also seems to be implicated in vesicle formation and in uptake of lipid signaling molecules. The beta subunit may assist in binding of the phospholipid substrate. Required for the proper folding, assembly and ER to Golgi exit of the ATP8A2:TMEM30A flippase complex. ATP8A2:TMEM30A may be involved in regulation of neurite outgrowth, and, reconstituted to liposomes, predomiminantly transports phosphatidylserine (PS) and to a lesser extent phosphatidylethanolamine (PE). The ATP8A1:TMEM30A flippase complex seems to play a role in regulation of cell migration probably involving flippase-mediated translocation of phosphatidylethanolamine (PE) at the plasma membrane. Required for the formation of the ATP8A2, ATP8B1 and ATP8B2 P-type ATPAse intermediate phosphoenzymes. Involved in uptake of platelet-activating factor (PAF). Can also mediate the export of alpha subunits ATP8A1, ATP8B1, ATP8B2, ATP8B4, ATP10A, ATP10B, ATP10D, ATP11A, ATP11B and ATP11C from the ER to other membrane localizations. In Mus musculus (Mouse), this protein is Cell cycle control protein 50A.